We begin with the raw amino-acid sequence, 227 residues long: Ribosomal RNA large subunit methyltransferase E (227 aa).

S-adenosyl-L-methionine contacts are provided by glycine 78, tryptophan 80, aspartate 103, aspartate 119, and aspartate 143. The Proton acceptor role is filled by lysine 183.

Belongs to the class I-like SAM-binding methyltransferase superfamily. RNA methyltransferase RlmE family.

It is found in the cytoplasm. The enzyme catalyses uridine(2552) in 23S rRNA + S-adenosyl-L-methionine = 2'-O-methyluridine(2552) in 23S rRNA + S-adenosyl-L-homocysteine + H(+). In terms of biological role, specifically methylates the uridine in position 2552 of 23S rRNA at the 2'-O position of the ribose in the fully assembled 50S ribosomal subunit. The polypeptide is Ribosomal RNA large subunit methyltransferase E (Rickettsia felis (strain ATCC VR-1525 / URRWXCal2) (Rickettsia azadi)).